A 203-amino-acid polypeptide reads, in one-letter code: E3 ubiquitin-protein ligase rnf152-B (203 aa).

An RING-type zinc finger spans residues 12-55; sequence CQICFNYYSPRRRPKLLDCKHTCCSVCLQQMRASQKDLRCPWCR. The chain crosses the membrane as a helical span at residues 167 to 187; that stretch reads SGVCTVILVACVLVFLLGIVL.

It belongs to the RNF152 family.

The protein resides in the lysosome membrane. The catalysed reaction is S-ubiquitinyl-[E2 ubiquitin-conjugating enzyme]-L-cysteine + [acceptor protein]-L-lysine = [E2 ubiquitin-conjugating enzyme]-L-cysteine + N(6)-ubiquitinyl-[acceptor protein]-L-lysine.. Its pathway is protein modification; protein ubiquitination. E3 ubiquitin-protein ligase that acts as a negative regulator of mTORC1 signaling by mediating ubiquitination of RagA/RRAGA and RHEB. Catalyzes 'Lys-63'-linked polyubiquitination of RagA/RRAGA in response to amino acid starvation, thereby regulating mTORC1 signaling. Also mediates monoubiquitination of RHEB, promoting its association with the TSC-TBC complex and subsequent inhibition. Also mediates 'Lys-48'-linked polyubiquitination of target proteins and their subsequent targeting to the proteasome for degradation. The protein is E3 ubiquitin-protein ligase rnf152-B of Xenopus laevis (African clawed frog).